The following is a 396-amino-acid chain: 1-deoxy-D-xylulose 5-phosphate reductoisomerase (396 aa).

T10, G11, S12, I13, N38, and N123 together coordinate NADPH. 1-deoxy-D-xylulose 5-phosphate is bound at residue K124. E125 is a binding site for NADPH. D149 is a Mn(2+) binding site. S150, E151, S185, and H208 together coordinate 1-deoxy-D-xylulose 5-phosphate. A Mn(2+)-binding site is contributed by E151. Position 214 (G214) interacts with NADPH. S221, N226, K227, and E230 together coordinate 1-deoxy-D-xylulose 5-phosphate. A Mn(2+)-binding site is contributed by E230.

The protein belongs to the DXR family. Mg(2+) is required as a cofactor. The cofactor is Mn(2+).

The catalysed reaction is 2-C-methyl-D-erythritol 4-phosphate + NADP(+) = 1-deoxy-D-xylulose 5-phosphate + NADPH + H(+). The protein operates within isoprenoid biosynthesis; isopentenyl diphosphate biosynthesis via DXP pathway; isopentenyl diphosphate from 1-deoxy-D-xylulose 5-phosphate: step 1/6. Functionally, catalyzes the NADPH-dependent rearrangement and reduction of 1-deoxy-D-xylulose-5-phosphate (DXP) to 2-C-methyl-D-erythritol 4-phosphate (MEP). The sequence is that of 1-deoxy-D-xylulose 5-phosphate reductoisomerase from Shewanella piezotolerans (strain WP3 / JCM 13877).